A 341-amino-acid polypeptide reads, in one-letter code: Barley B recombinant-like protein A (341 aa).

Residues 48 to 62 (HQHQQHVPHHHHQPH) show a composition bias toward basic residues. 2 disordered regions span residues 48-95 (HQHQ…MNFA) and 150-234 (MQQQ…RKNI). Residues 68 to 77 (GANGNANGGA) are compositionally biased toward low complexity. Positions 78-90 (MPPPPATEAPPSM) are enriched in pro residues. Over residues 190-211 (PKKRQQGRQPKVPRAKKPKKSA) the composition is skewed to basic residues.

Belongs to the BBR/BPC family.

It localises to the nucleus. In terms of biological role, transcriptional regulator that specifically binds to GA-rich elements (GAGA-repeats) present in regulatory sequences of genes involved in developmental processes. In Oryza sativa subsp. japonica (Rice), this protein is Barley B recombinant-like protein A.